Reading from the N-terminus, the 244-residue chain is Aspartate/glutamate leucyltransferase (244 aa).

This sequence belongs to the R-transferase family. Bpt subfamily.

The protein resides in the cytoplasm. The catalysed reaction is N-terminal L-glutamyl-[protein] + L-leucyl-tRNA(Leu) = N-terminal L-leucyl-L-glutamyl-[protein] + tRNA(Leu) + H(+). It catalyses the reaction N-terminal L-aspartyl-[protein] + L-leucyl-tRNA(Leu) = N-terminal L-leucyl-L-aspartyl-[protein] + tRNA(Leu) + H(+). In terms of biological role, functions in the N-end rule pathway of protein degradation where it conjugates Leu from its aminoacyl-tRNA to the N-termini of proteins containing an N-terminal aspartate or glutamate. This is Aspartate/glutamate leucyltransferase from Paramagnetospirillum magneticum (strain ATCC 700264 / AMB-1) (Magnetospirillum magneticum).